A 648-amino-acid polypeptide reads, in one-letter code: Threonine--tRNA ligase (648 aa).

The region spanning 1–61 is the TGS domain; it reads MITITFPDGA…EEDGSIEIIT (61 aa). A catalytic region spans residues 242–540; sequence DHRKLGKELD…LIETYKGAFP (299 aa). Positions 336, 387, and 517 each coordinate Zn(2+).

This sequence belongs to the class-II aminoacyl-tRNA synthetase family. Homodimer. The cofactor is Zn(2+).

Its subcellular location is the cytoplasm. The catalysed reaction is tRNA(Thr) + L-threonine + ATP = L-threonyl-tRNA(Thr) + AMP + diphosphate + H(+). Catalyzes the attachment of threonine to tRNA(Thr) in a two-step reaction: L-threonine is first activated by ATP to form Thr-AMP and then transferred to the acceptor end of tRNA(Thr). Also edits incorrectly charged L-seryl-tRNA(Thr). The polypeptide is Threonine--tRNA ligase (Streptococcus equi subsp. zooepidemicus (strain H70)).